The chain runs to 464 residues: Soluble pyridine nucleotide transhydrogenase (464 aa).

Position 35-44 (Asp35–Cys44) interacts with FAD.

It belongs to the class-I pyridine nucleotide-disulfide oxidoreductase family. Requires FAD as cofactor.

It is found in the cytoplasm. It carries out the reaction NAD(+) + NADPH = NADH + NADP(+). In terms of biological role, conversion of NADPH, generated by peripheral catabolic pathways, to NADH, which can enter the respiratory chain for energy generation. This Azotobacter vinelandii (strain DJ / ATCC BAA-1303) protein is Soluble pyridine nucleotide transhydrogenase.